A 177-amino-acid polypeptide reads, in one-letter code: Antigen TyF1 (177 aa).

It belongs to the Dps family. Homodecamer.

In Treponema pallidum subsp. pertenue (Yaws treponeme), this protein is Antigen TyF1.